The sequence spans 222 residues: MSHLVKMENGQSQTIQEMLGCIERYNPDHLKTLEAYIQDQAKNNTYDLEANLAVLKLYQFNPHMLNFEITYTILLKSLTNLPHTDFVMAKCLLLPQQMKDENIQTIIDLADILERADFTLFWQRAEVNRTMFRHISGFHDSIRKFVSHVVSITFQTIKKDLLKELLGGIEDSTLESWIKRNGWKHQGQDLIVVAMQDDKIKTKNITEKIEFENVGALMAQCL.

The PCI domain occupies 46 to 208 (YDLEANLAVL…KIKTKNITEK (163 aa)).

It belongs to the eIF-3 subunit K family. As to quaternary structure, component of the eukaryotic translation initiation factor 3 (eIF-3) complex. The eIF-3 complex interacts with pix.

It is found in the cytoplasm. Component of the eukaryotic translation initiation factor 3 (eIF-3) complex, which is involved in protein synthesis of a specialized repertoire of mRNAs and, together with other initiation factors, stimulates binding of mRNA and methionyl-tRNAi to the 40S ribosome. The eIF-3 complex specifically targets and initiates translation of a subset of mRNAs involved in cell proliferation. The chain is Eukaryotic translation initiation factor 3 subunit K from Drosophila persimilis (Fruit fly).